Reading from the N-terminus, the 303-residue chain is Olfactory receptor 10A2 (303 aa).

The Extracellular segment spans residues 1 to 12; it reads MSFSSLPTEIQS. Residues 13 to 33 traverse the membrane as a helical segment; sequence LLFLTFLTIYLVTLMGNCLII. The Cytoplasmic portion of the chain corresponds to 34 to 41; the sequence is LVTLADPM. A helical transmembrane segment spans residues 42-62; that stretch reads LHSPMYFFLRNLSFLEIGFNL. Residues 63–86 lie on the Extracellular side of the membrane; it reads VIVPKMLGTLLAQDTTISFLGCAT. Residues cysteine 84 and cysteine 176 are joined by a disulfide bond. The helical transmembrane segment at 87–107 threads the bilayer; that stretch reads QMYFFFFFGVAECFLLATMAY. Residues 108–126 are Cytoplasmic-facing; sequence DRYVAICSPLHYPVIMNQR. A helical transmembrane segment spans residues 127 to 147; the sequence is TRAKLAAASWFPGFPVATVQT. Residues 148-184 are Extracellular-facing; that stretch reads TWLFSFPFCGTNKVNHFFCDSPPVLRLVCADTALFEI. The chain crosses the membrane as a helical span at residues 185–204; it reads YAIVGTILVVMIPCLLILCS. Residues 205–224 are Cytoplasmic-facing; that stretch reads YTHIAAAILKIPSAKGKNKA. A helical membrane pass occupies residues 225–245; the sequence is FSTCSSHLLVVSLFYISLSLT. Residues 246 to 258 lie on the Extracellular side of the membrane; the sequence is YFRPKSNNSPEGK. The helical transmembrane segment at 259-279 threads the bilayer; it reads KLLSLSYTVMTPMLNPIIYSL. Over 280-301 the chain is Cytoplasmic; that stretch reads RNNEVKNALSRTVSKALALRNC.

Belongs to the G-protein coupled receptor 1 family.

It is found in the cell membrane. Functionally, odorant receptor. The sequence is that of Olfactory receptor 10A2 (OR10A2) from Homo sapiens (Human).